The sequence spans 469 residues: NADH-quinone oxidoreductase subunit 13 (469 aa).

A run of 14 helical transmembrane segments spans residues 1–21, 23–43, 47–67, 69–89, 91–111, 115–135, 144–164, 190–210, 258–278, 284–304, 308–328, 354–374, 390–410, and 430–450; these read MVVLAVLLPVVFGALLLLGLP, ALGVLGAGLSFLLNLYLFLTH, VAHAFQAPLLPGAGVYWAFGL, GLSALFFLTIALTVFLGALVA, VEGRFLGLALLMEGLLLGLFA, LLVFYVFFEAALIPALLMLYL, ALYTFVLFTLVGSLPMLAAVL, AFWVFLGFALAFAIKTPLFPL, GLLLFLAALSALYGAWVAFAA, LLAYAGLSHMGVAALGVFSGT, AMGGLYLLAASGVYTGGLFLL, LAALALILFLAMVGLPGLSGF, WLAALAFLSVIASAAYALTAF, and WGFALLSVLALLLMGVFPGYF.

The protein belongs to the complex I subunit 4 family. NDH-1 is composed of 15 different subunits, Nqo1 to Nqo15. The complex has a L-shaped structure, with the hydrophobic arm (subunits Nqo7, Nqo8 and Nqo10 to Nqo14) embedded in the membrane and the hydrophilic peripheral arm (subunits Nqo1 to Nqo6, Nqo9 and Nqo15) protruding into the bacterial cytoplasm. The hydrophilic domain contains all the redox centers.

It localises to the cell inner membrane. The enzyme catalyses a quinone + NADH + 5 H(+)(in) = a quinol + NAD(+) + 4 H(+)(out). Its function is as follows. NDH-1 shuttles electrons from NADH, via FMN and iron-sulfur (Fe-S) centers, to quinones in the respiratory chain. The immediate electron acceptor for the enzyme in this species is menaquinone. Couples the redox reaction to proton translocation (for every two electrons transferred, four hydrogen ions are translocated across the cytoplasmic membrane), and thus conserves the redox energy in a proton gradient required for the synthesis of ATP. The protein is NADH-quinone oxidoreductase subunit 13 (nqo13) of Thermus thermophilus (strain ATCC 27634 / DSM 579 / HB8).